The chain runs to 479 residues: Glutamate--tRNA ligase (479 aa).

Positions 9-19 match the 'HIGH' region motif; that stretch reads PSPTGLFHIGT. The 'KMSKS' region motif lies at 248–252; it reads KLSKR. ATP is bound at residue Lys251.

Belongs to the class-I aminoacyl-tRNA synthetase family. Glutamate--tRNA ligase type 1 subfamily. As to quaternary structure, monomer.

It is found in the cytoplasm. It catalyses the reaction tRNA(Glu) + L-glutamate + ATP = L-glutamyl-tRNA(Glu) + AMP + diphosphate. Functionally, catalyzes the attachment of glutamate to tRNA(Glu) in a two-step reaction: glutamate is first activated by ATP to form Glu-AMP and then transferred to the acceptor end of tRNA(Glu). In Prochlorococcus marinus (strain MIT 9215), this protein is Glutamate--tRNA ligase.